A 470-amino-acid chain; its full sequence is O-acyltransferase pboC (470 aa).

Active-site proton acceptor residues include His-149 and Asp-386.

This sequence belongs to the plant acyltransferase family. As to quaternary structure, monomer.

It participates in secondary metabolite biosynthesis. O-acetyltransferase; part of the gene cluster that mediates the biosynthesis of protubonine B, a hydroxylated and diacetylated cyclo-L-Trp-L-Leu derivative. Within the pathway, pboC catalyzes the acetylation of protubonine D at the hydroxy group to produce protubonine C. The first step of the protubonine B synthesis is performed by the nonribosomal peptide synthetase pboA that catalyzes the formation of cyclo-L-Trp-L-Leu by condensing L-Leu with L-Trp. The flavin-dependent monooxygenase pboD is responsible for hydroxylation at C-3 of the indole ring and subsequent formation of the pyrrolidine ring, leadind to protubonine D. Protubonine D is further diacetylated by two acetyltransferases, pboB and pboC, to form the final product protubonine B via protubonine C. The chain is O-acyltransferase pboC from Aspergillus ustus.